The following is an 837-amino-acid chain: MTKVVAPVERVVFELNGERQEVAAADVEPSTTLLEFIRTRTPFRGPKLGCGEGGCGACVILIAKYNPKTDEVTEFNVNSCLTLLYSIHFCSIITTEGLGNTKDGFHSIQKRMSGFHASQCGFCTPGMCMSIFSSLVNADKSKKPAPPKGFSKLSISEAERSFSGNMCRCTGYRPIVDACKSFESDVDLEDLGLNIFWKKGDKHPDPTKLPSYTLGGGICTFPDFLKSEIKSSLDFNDASISGPREGWYCPKSIKQYYKLVNSGLFSESSVKVVVGNTSTGVYKDQDLYDKYIDIAGIPELSAIVRKDKGIEIGAATSISRTIEILNQESELTSSPNGSVVFRKLAEHMSKVASPFVRNTASIGGNIILAHKYPFRSDIATILLGAAATVNLQVSSKTLHVNLEQFLEQPPLDHSTLLLSIFIPHWASDCKKEHTLVFETYRAAPRPLGNAVSYVNSAFLGHVSLDKSSGDNILSNLHLAFGAYGTKHAIRARKVEEYLTGKILSASVVLEAIRLLRETIVPVEGTTHPEYRVSVAVGFLFSFLSPLCKGVIESGKTLSISEDLVDTDNVHNKPLSSRRETLSDDEYTPVGDPIKKYKVEVQASGEAIYVDDIPAPKNCLYGEFIYSTQPLANVKSIKFKPSLASKKIITVVSAKDIPTGGRNIGSTFWFGDEEPLFGDPIAEFAGQVLGVVIAETQPYADMAAKQAVVEYTTDGLKAPILTVEQAVQSNSYFQVPPERAPKQVGDFSNGMAEADHKIMSEEVKLSSQYYFYMETQTALAIPDEDNTMTVYSSSQFSELAQNVISKCLGIPFNNVRVITRRAGGGFGGKVVRSLHVRI.

Residues 9 to 98 enclose the 2Fe-2S ferredoxin-type domain; the sequence is ERVVFELNGE…FCSIITTEGL (90 aa). Cys-50, Cys-55, Cys-58, and Cys-80 together coordinate [2Fe-2S] cluster. Positions 240-427 constitute an FAD-binding PCMH-type domain; sequence ISGPREGWYC…LSIFIPHWAS (188 aa).

The protein belongs to the xanthine dehydrogenase family. In terms of assembly, aldehyde oxidases (AO) are homodimers and heterodimers of AO subunits. The cofactor is [2Fe-2S] cluster. Requires FAD as cofactor. Mo-molybdopterin serves as cofactor.

It carries out the reaction an aldehyde + O2 + H2O = a carboxylate + H2O2 + H(+). The sequence is that of Probable aldehyde oxidase 4 from Oryza sativa subsp. japonica (Rice).